Here is a 367-residue protein sequence, read N- to C-terminus: Heme A synthase (367 aa).

5 consecutive transmembrane segments (helical) span residues 25 to 45, 111 to 131, 139 to 159, 174 to 194, and 210 to 230; these read ALRFWLGFVLLALFCLVLVGG, LIARGIGVIFALPLLYFWLTG, WPLVGILALGGLQGFIGWWMV, LATHLVMACLIFAGCMWIMRG, and GFAATIAIFALFQIYLGALVA. Histidine 274 contacts heme. 3 helical membrane-spanning segments follow: residues 276 to 296, 305 to 325, and 327 to 347; these read IGAYTLFALTLINMVIALRAA, AVVLFSLVTLQAAIGIATLLM, and VPLHWGLLHQAGALVVFGFAI. Histidine 335 provides a ligand contact to heme.

Belongs to the COX15/CtaA family. Type 2 subfamily. Interacts with CtaB. Heme b serves as cofactor.

It is found in the cell membrane. It carries out the reaction Fe(II)-heme o + 2 A + H2O = Fe(II)-heme a + 2 AH2. It functions in the pathway porphyrin-containing compound metabolism; heme A biosynthesis; heme A from heme O: step 1/1. Functionally, catalyzes the conversion of heme O to heme A by two successive hydroxylations of the methyl group at C8. The first hydroxylation forms heme I, the second hydroxylation results in an unstable dihydroxymethyl group, which spontaneously dehydrates, resulting in the formyl group of heme A. The protein is Heme A synthase of Rhizobium leguminosarum bv. trifolii (strain WSM2304).